The sequence spans 446 residues: Packaging protein 1 (446 aa).

The segment covering 1-10 (METRGRRRAF) has biased composition (basic residues). A disordered region spans residues 1-74 (METRGRRRAF…PSQPPQPRSL (74 aa)). ATP is bound at residue 170–177 (GPTGCGKS). The interval 439-446 (RAYRKRNK) is DNA-binding.

This sequence belongs to the adenoviridae packaging protein 1 family. As to quaternary structure, homodimer. Part of a genome packaging complex composed of packaging proteins 1, 2 and 3; this complex specifically binds to the packaging sequence on the left end of viral genomic DNA and performs packaging of the viral genome. Interacts with protein 33K.

The protein localises to the virion. The protein resides in the host nucleus. Its subcellular location is the host nucleoplasm. It is found in the host nucleolus. In terms of biological role, component of the packaging machinery which encapsidates the viral DNA into preformed capsids and transcriptional activator of the viral major late promoter (MLP). Binds, along with packaging proteins 2 and 3, to the specific packaging sequence on the left end of viral genomic DNA and displays ATPase activity thereby providing the power stroke of the packaging machinery. The activity of packaging protein IVa2 is stimulated by protein 33K which acts as a terminase. May be the protein that pumps DNA into the capsid powered by ATP hydrolysis. Specifically binds to the 5'-CG-3' nucleotides of the repeats making up the packaging sequence. Component of the DEF-A and DEF-B transcription factors that bind downstream elements of the major late promoter (MLP), and stimulate transcription from the MLP after initiation of viral DNA replication. DEF-A is a heterodimer packaging proteins 1 and 2 and DEF-B is a homodimer of packaging protein 1. This is Packaging protein 1 from Human adenovirus F serotype 40 (HAdV-40).